Consider the following 336-residue polypeptide: MSFFGFGQSVEVEILLNDAESRKRAEHKTEDGKKEKYFLFYDGETVSGKVGLALKNPNKRLEHQGIKIEFIGQIELYYDRGNHHEFVSLVKDLARPGEITQSQAFDFEFTHVEKPYESYTGQNVKLRYFLRATISRRLNDVVKEMDIVVHTLSTYPELNSSIKMEVGIEDCLHIEFEYNKSKYHLKDVIVGKIYFLLVRIKIKHMEIDIIKRETTGTGPNVYHENVTIAKYEIMDGAPVRGESIPIRLFLAGYELTPTMRDINKKFSVRYYLNLVLIDEEERRYFKQQEVVLWRKGDIVRKSMSHQAAIASQRFEGTTSLGEVRTPSQLSDNNCRQ.

Phosphoserine is present on residues Ser302, Ser304, and Ser319.

It belongs to the VPS26 family. As to quaternary structure, component of the heterotrimeric retromer cargo-selective complex (CSC), also described as vacuolar protein sorting subcomplex (VPS), formed by VPS26 (VPS26A or VPS26B), VPS29 and VPS35. The CSC has a highly elongated structure with VPS26 and VPS29 binding independently at opposite distal ends of VPS35 as central platform. The CSC is believed to associate with variable sorting nexins to form functionally distinct retromer complex variants. The originally described SNX-BAR retromer is a pentamer containing the CSC and a heterodimeric membrane-deforming subcomplex formed between SNX1 or SNX2 and SNX5 or SNX6 (also called SNX-BAR subcomplex); the respective CSC and SNX-BAR subcomplexes associate with low affinity. The CSC associates with SNX3 to form a SNX3-retromer complex. The CSC associates with SNX27, the WASH complex and the SNX-BAR subcomplex to form the SNX27-retromer complex. Interacts with VPS29, VPS35, TBC1D5, GOLPH3, SNX27.

Its subcellular location is the cytoplasm. The protein resides in the membrane. It is found in the early endosome. It localises to the late endosome. Functionally, acts as a component of the retromer cargo-selective complex (CSC). The CSC is believed to be the core functional component of retromer or respective retromer complex variants acting to prevent missorting of selected transmembrane cargo proteins into the lysosomal degradation pathway. The recruitment of the CSC to the endosomal membrane involves RAB7A and SNX3. The SNX-BAR retromer mediates retrograde transport of cargo proteins from endosomes to the trans-Golgi network (TGN) and is involved in endosome-to-plasma membrane transport for cargo protein recycling. The SNX3-retromer mediates the retrograde transport of WLS distinct from the SNX-BAR retromer pathway. The SNX27-retromer is believed to be involved in endosome-to-plasma membrane trafficking and recycling of a broad spectrum of cargo proteins. The CSC seems to act as recruitment hub for other proteins, such as the WASH complex and TBC1D5. May be involved in retrograde transport of SORT1 but not of IGF2R. Acts redundantly with VSP26A in SNX-27 mediated endocytic recycling of SLC2A1/GLUT1. In Pongo abelii (Sumatran orangutan), this protein is Vacuolar protein sorting-associated protein 26B (VPS26B).